The primary structure comprises 848 residues: Beta-galactosidase 11 (848 aa).

The signal sequence occupies residues 1-23 (MSAAAVLAVVAAAVAALAAAASG). A glycan (N-linked (GlcNAc...) asparagine) is linked at Asn-29. Glu-189 (proton donor) is an active-site residue. The Nucleophile role is filled by Glu-260. N-linked (GlcNAc...) asparagine glycans are attached at residues Asn-261, Asn-472, and Asn-783. Residues 750 to 837 (GGLKPTAVLS…GTLAVQAKCS (88 aa)) form the SUEL-type lectin domain.

It belongs to the glycosyl hydrolase 35 family.

The protein localises to the secreted. Its subcellular location is the extracellular space. The protein resides in the apoplast. It carries out the reaction Hydrolysis of terminal non-reducing beta-D-galactose residues in beta-D-galactosides.. In Oryza sativa subsp. japonica (Rice), this protein is Beta-galactosidase 11.